A 134-amino-acid polypeptide reads, in one-letter code: UPF0412 protein YaaI (134 aa).

The first 23 residues, 1–23 (MRSVLTISASLLFGLALSSVAHA), serve as a signal peptide directing secretion.

This sequence belongs to the UPF0412 family.

This chain is UPF0412 protein YaaI, found in Salmonella choleraesuis (strain SC-B67).